The primary structure comprises 243 residues: DNA repair protein RecO (243 aa).

The protein belongs to the RecO family.

Functionally, involved in DNA repair and RecF pathway recombination. The chain is DNA repair protein RecO from Caulobacter sp. (strain K31).